The following is a 345-amino-acid chain: Phosphoribosylformylglycinamidine cyclo-ligase (345 aa).

Belongs to the AIR synthase family.

Its subcellular location is the cytoplasm. It catalyses the reaction 2-formamido-N(1)-(5-O-phospho-beta-D-ribosyl)acetamidine + ATP = 5-amino-1-(5-phospho-beta-D-ribosyl)imidazole + ADP + phosphate + H(+). Its pathway is purine metabolism; IMP biosynthesis via de novo pathway; 5-amino-1-(5-phospho-D-ribosyl)imidazole from N(2)-formyl-N(1)-(5-phospho-D-ribosyl)glycinamide: step 2/2. The chain is Phosphoribosylformylglycinamidine cyclo-ligase from Lactobacillus acidophilus (strain ATCC 700396 / NCK56 / N2 / NCFM).